The sequence spans 556 residues: Bifunctional methyltransferase (556 aa).

The tract at residues 1-310 (MQYSIQKFLN…NRVIEISLIQ (310 aa)) is RF MTase. S-adenosyl-L-methionine contacts are provided by residues 148 to 152 (GTGSG), aspartate 171, tryptophan 200, and asparagine 215. Residue 215–218 (NPPY) coordinates substrate. Residues 313 to 556 (RSYARRIGKS…IITKIPPKSY (244 aa)) form a tRNA MTase region. An insert region spans residues 348–399 (KNYNSCKIKSNYTKFNLEKSKESVSRGAERIKIREHLRTYKEDVANFSSSTS). 4 residues coordinate S-adenosyl-L-methionine: glutamate 403, glutamate 428, asparagine 455, and aspartate 477. Residue aspartate 477 is part of the active site. The substrate site is built by lysine 481 and aspartate 513.

The protein in the C-terminal section; belongs to the class I-like SAM-binding methyltransferase superfamily. TrmB family. It in the N-terminal section; belongs to the protein N5-glutamine methyltransferase family. PrmC subfamily.

It carries out the reaction L-glutaminyl-[peptide chain release factor] + S-adenosyl-L-methionine = N(5)-methyl-L-glutaminyl-[peptide chain release factor] + S-adenosyl-L-homocysteine + H(+). It catalyses the reaction guanosine(46) in tRNA + S-adenosyl-L-methionine = N(7)-methylguanosine(46) in tRNA + S-adenosyl-L-homocysteine. Its function is as follows. Methylates the class 1 translation termination release factors RF1/PrfA and RF2/PrfB on the glutamine residue of the universally conserved GGQ motif. In terms of biological role, catalyzes the formation of N(7)-methylguanine at position 46 (m7G46) in tRNA. The chain is Bifunctional methyltransferase (prmC/trmB) from Rickettsia bellii (strain RML369-C).